Consider the following 234-residue polypeptide: Probable pectate lyase F (234 aa).

An N-terminal signal peptide occupies residues 1–17; sequence MFSRIALLPAFLPVALA. Asn-168 and Asn-194 each carry an N-linked (GlcNAc...) asparagine glycan.

Belongs to the polysaccharide lyase 3 family. Ca(2+) is required as a cofactor.

It is found in the secreted. It carries out the reaction Eliminative cleavage of (1-&gt;4)-alpha-D-galacturonan to give oligosaccharides with 4-deoxy-alpha-D-galact-4-enuronosyl groups at their non-reducing ends.. Its function is as follows. Pectinolytic enzyme consist of four classes of enzymes: pectin lyase, polygalacturonase, pectin methylesterase and rhamnogalacturonase. Among pectinolytic enzymes, pectin lyase is the most important in depolymerization of pectin, since it cleaves internal glycosidic bonds of highly methylated pectins. Favors pectate, the anion, over pectin, the methyl ester. This chain is Probable pectate lyase F (plyF), found in Aspergillus flavus (strain ATCC 200026 / FGSC A1120 / IAM 13836 / NRRL 3357 / JCM 12722 / SRRC 167).